A 213-amino-acid chain; its full sequence is Dimethylamine corrinoid protein 3 (213 aa).

Residues Met1–Leu91 form the B12-binding N-terminal domain. Residues Gly92–Leu213 enclose the B12-binding domain. His104 serves as a coordination point for methylcob(III)alamin.

Belongs to the methylamine corrinoid protein family.

It participates in one-carbon metabolism; methanogenesis from dimethylamine. Functionally, acts as a methyl group carrier between MtbB and MtbA. The polypeptide is Dimethylamine corrinoid protein 3 (mtbC3) (Methanosarcina acetivorans (strain ATCC 35395 / DSM 2834 / JCM 12185 / C2A)).